The following is a 368-amino-acid chain: UDP-N-acetylglucosamine--N-acetylmuramyl-(pentapeptide) pyrophosphoryl-undecaprenol N-acetylglucosamine transferase (368 aa).

UDP-N-acetyl-alpha-D-glucosamine contacts are provided by residues 10–12 (TGG), Asn-128, Arg-170, Ser-199, Ile-250, and Gln-295.

The protein belongs to the glycosyltransferase 28 family. MurG subfamily.

The protein resides in the cell inner membrane. It catalyses the reaction di-trans,octa-cis-undecaprenyl diphospho-N-acetyl-alpha-D-muramoyl-L-alanyl-D-glutamyl-meso-2,6-diaminopimeloyl-D-alanyl-D-alanine + UDP-N-acetyl-alpha-D-glucosamine = di-trans,octa-cis-undecaprenyl diphospho-[N-acetyl-alpha-D-glucosaminyl-(1-&gt;4)]-N-acetyl-alpha-D-muramoyl-L-alanyl-D-glutamyl-meso-2,6-diaminopimeloyl-D-alanyl-D-alanine + UDP + H(+). Its pathway is cell wall biogenesis; peptidoglycan biosynthesis. In terms of biological role, cell wall formation. Catalyzes the transfer of a GlcNAc subunit on undecaprenyl-pyrophosphoryl-MurNAc-pentapeptide (lipid intermediate I) to form undecaprenyl-pyrophosphoryl-MurNAc-(pentapeptide)GlcNAc (lipid intermediate II). The protein is UDP-N-acetylglucosamine--N-acetylmuramyl-(pentapeptide) pyrophosphoryl-undecaprenol N-acetylglucosamine transferase of Chlorobium phaeovibrioides (strain DSM 265 / 1930) (Prosthecochloris vibrioformis (strain DSM 265)).